A 473-amino-acid chain; its full sequence is MWGLAGGRLFGIFSAPVLVAVVCCAQSVNDPGNMSFVKETVDKLLKGYDIRLRPDFGGPPVCVGMNIDIASIDMVSEVNMDYTLTMYFQQYWRDKRLAYSGIPLNLTLDNRVADQLWVPDTYFLNDKKSFVHGVTVKNRMIRLHPDGTVLYGLRITTTAACMMDLRRYPLDEQNCTLEIESYGYTTDDIEFYWRGGDKAVTGVERIELPQFSIVEHRLVSRNVVFATGAYPRLSLSFRLKRNIGYFILQTYMPSILITILSWVSFWINYDASAARVALGITTVLTMTTINTHLRETLPKIPYVKAIDMYLMGCFVFVFLALLEYAFVNYIFFGRGPQRQKKLAEKTAKAKNDRSKSESNRVDAHGNILLTSLEVHNEMNEVSGGIGDTRNSAISFDNSGIQYRKQSMPREGHGRFLGDRSLPHKKTHLRRRSSQLKIKIPDLTDVNAIDRWSRIVFPFTFSLFNLVYWLYYVN.

Positions M1–A25 are cleaved as a signal peptide. Over Q26–F246 the chain is Extracellular. 2 N-linked (GlcNAc...) asparagine glycosylation sites follow: N33 and N105. D120–Y122 is a benzamidine binding site. Y122 is a binding site for 4-aminobutanoate. Residue Y122 participates in histamine binding. A disulfide bond links C161 and C175. N174 carries an N-linked (GlcNAc...) asparagine glycan. 4-aminobutanoate-binding residues include E180 and Y182. Benzamidine-binding positions include E180–Y182 and F225. S181–Y182 lines the histamine pocket. Residue T227 coordinates 4-aminobutanoate. T227 contributes to the histamine binding site. A helical membrane pass occupies residues I247–I267. The Cytoplasmic segment spans residues N268 to A271. Residues S272 to H292 form a helical membrane-spanning segment. Residues L293–K304 are Extracellular-facing. Residues A305 to N328 form a helical membrane-spanning segment. The Cytoplasmic segment spans residues Y329 to A447. The chain crosses the membrane as a helical span at residues I448–Y470. Residues Y471–N473 are Extracellular-facing.

It belongs to the ligand-gated ion channel (TC 1.A.9) family. Gamma-aminobutyric acid receptor (TC 1.A.9.5) subfamily. GABRB3 sub-subfamily. In terms of assembly, heteropentamer, formed by a combination of alpha (GABRA1-6), beta (GABRB1-3), gamma (GABRG1-3), delta (GABRD), epsilon (GABRE), rho (GABRR1-3), pi (GABRP) and theta (GABRQ) chains, each subunit exhibiting distinct physiological and pharmacological properties. Can form functional homopentamers (in vitro). Interacts with UBQLN1. May interact with KIF21B. Identified in a complex of 720 kDa composed of LHFPL4, NLGN2, GABRA1, GABRB2, GABRG2 and GABRB3. Interacts with LHFPL4. Interacts with GIT1; this interaction is required for synaptic GABRB3 surface stability and inhibitory synapse strength.

The protein localises to the postsynaptic cell membrane. Its subcellular location is the cell membrane. It localises to the cytoplasmic vesicle membrane. The enzyme catalyses chloride(in) = chloride(out). With respect to regulation, potentiated by histamine. Functionally, beta subunit of the heteropentameric ligand-gated chloride channel gated by gamma-aminobutyric acid (GABA), a major inhibitory neurotransmitter in the brain. GABA-gated chloride channels, also named GABA(A) receptors (GABAAR), consist of five subunits arranged around a central pore and contain GABA active binding site(s) located at the alpha and beta subunit interface(s). GABAARs containing beta-3/GABRB3 subunit are found at both synaptic and extrasynaptic sites. When activated by GABA, GABAARs selectively allow the flow of chloride anions across the cell membrane down their electrochemical gradient. Chloride influx into the postsynaptic neuron following GABAAR opening decreases the neuron ability to generate a new action potential, thereby reducing nerve transmission. GABAARs containing alpha-1 and beta-3 subunits exhibit synaptogenic activity; the gamma-2 subunit being necessary but not sufficient to induce rapid synaptic contacts formation. Extrasynaptic beta-3 receptors contribute to the tonic GABAergic inhibition. GABAARs containing alpha-1, beta-3 and epsilon subunits may also permit spontaneous chloride channel activity while preserving the structural information required for GABA-gated openings. Beta-containing GABAARs can simultaneously bind GABA and histamine where histamine binds at the interface of two neighboring beta subunits, which may be involved in the regulation of sleep and wakefulness. Plays an important role in somatosensation and in the production of antinociception. The chain is Gamma-aminobutyric acid receptor subunit beta-3 from Homo sapiens (Human).